A 359-amino-acid polypeptide reads, in one-letter code: Probable dual-specificity RNA methyltransferase RlmN (359 aa).

Catalysis depends on Glu-100, which acts as the Proton acceptor. Positions 106–340 (TDKRLTVCVS…VSVRASRGRD (235 aa)) constitute a Radical SAM core domain. Residues Cys-113 and Cys-345 are joined by a disulfide bond. [4Fe-4S] cluster contacts are provided by Cys-120, Cys-124, and Cys-127. S-adenosyl-L-methionine contacts are provided by residues 167 to 168 (GE), Ser-197, 226 to 228 (SLH), and Asn-302. Residue Cys-345 is the S-methylcysteine intermediate of the active site.

The protein belongs to the radical SAM superfamily. RlmN family. It depends on [4Fe-4S] cluster as a cofactor.

It is found in the cytoplasm. The enzyme catalyses adenosine(2503) in 23S rRNA + 2 reduced [2Fe-2S]-[ferredoxin] + 2 S-adenosyl-L-methionine = 2-methyladenosine(2503) in 23S rRNA + 5'-deoxyadenosine + L-methionine + 2 oxidized [2Fe-2S]-[ferredoxin] + S-adenosyl-L-homocysteine. The catalysed reaction is adenosine(37) in tRNA + 2 reduced [2Fe-2S]-[ferredoxin] + 2 S-adenosyl-L-methionine = 2-methyladenosine(37) in tRNA + 5'-deoxyadenosine + L-methionine + 2 oxidized [2Fe-2S]-[ferredoxin] + S-adenosyl-L-homocysteine. Its function is as follows. Specifically methylates position 2 of adenine 2503 in 23S rRNA and position 2 of adenine 37 in tRNAs. The protein is Probable dual-specificity RNA methyltransferase RlmN of Prochlorococcus marinus (strain NATL1A).